A 104-amino-acid chain; its full sequence is Iron-sulfur cluster assembly protein CyaY (104 aa).

This sequence belongs to the frataxin family.

Involved in iron-sulfur (Fe-S) cluster assembly. May act as a regulator of Fe-S biogenesis. In Aliivibrio fischeri (strain MJ11) (Vibrio fischeri), this protein is Iron-sulfur cluster assembly protein CyaY.